Here is a 94-residue protein sequence, read N- to C-terminus: Large ribosomal subunit protein bL25 (94 aa).

It belongs to the bacterial ribosomal protein bL25 family. Part of the 50S ribosomal subunit; part of the 5S rRNA/L5/L18/L25 subcomplex. Contacts the 5S rRNA. Binds to the 5S rRNA independently of L5 and L18.

Functionally, this is one of the proteins that binds to the 5S RNA in the ribosome where it forms part of the central protuberance. The sequence is that of Large ribosomal subunit protein bL25 from Salmonella gallinarum (strain 287/91 / NCTC 13346).